A 479-amino-acid chain; its full sequence is Probable periplasmic serine endoprotease DegP-like (479 aa).

The N-terminal stretch at 1-27 (MSMPSLKKYAAALFAVFLMGQSVAAHA) is a signal peptide. Residues histidine 118, aspartate 148, and serine 221 each act as charge relay system in the active site. Residues 219–221 (GNS) and 276–280 (LGVVI) each bind substrate. 2 consecutive PDZ domains span residues 265 to 356 (LKAS…VREG) and 362 to 468 (KVAV…LRQG). Positions 368–390 (MPADDGDEATNDAAPSAERSSNR) are disordered.

It belongs to the peptidase S1C family.

Its subcellular location is the periplasm. It catalyses the reaction Acts on substrates that are at least partially unfolded. The cleavage site P1 residue is normally between a pair of hydrophobic residues, such as Val-|-Val.. Its function is as follows. Might be efficient in the degradation of transiently denatured and unfolded proteins which accumulate in the periplasm following stress conditions. This Pseudomonas fulva (strain 12-X) protein is Probable periplasmic serine endoprotease DegP-like.